A 304-amino-acid chain; its full sequence is Homoserine kinase (304 aa).

90 to 100 (PLARGLGSSAS) contributes to the ATP binding site.

The protein belongs to the GHMP kinase family. Homoserine kinase subfamily.

It localises to the cytoplasm. The catalysed reaction is L-homoserine + ATP = O-phospho-L-homoserine + ADP + H(+). It participates in amino-acid biosynthesis; L-threonine biosynthesis; L-threonine from L-aspartate: step 4/5. Catalyzes the ATP-dependent phosphorylation of L-homoserine to L-homoserine phosphate. This Staphylococcus aureus (strain bovine RF122 / ET3-1) protein is Homoserine kinase.